We begin with the raw amino-acid sequence, 556 residues long: Formate--tetrahydrofolate ligase (556 aa).

65–72 (TPAGEGKT) serves as a coordination point for ATP.

Belongs to the formate--tetrahydrofolate ligase family.

The catalysed reaction is (6S)-5,6,7,8-tetrahydrofolate + formate + ATP = (6R)-10-formyltetrahydrofolate + ADP + phosphate. Its pathway is one-carbon metabolism; tetrahydrofolate interconversion. The polypeptide is Formate--tetrahydrofolate ligase (Clostridium acidurici (Gottschalkia acidurici)).